We begin with the raw amino-acid sequence, 595 residues long: Anthranilate synthase alpha subunit 1, chloroplastic (595 aa).

The N-terminal 54 residues, 1-54 (MSSSMNVATMQALTFSRRLLPSVASRYLSSSSVTVTGYSGRSSAYAPSFRSIKC), are a transit peptide targeting the chloroplast. An N-acetylvaline modification is found at Val55. L-tryptophan-binding positions include Ser115 and 356-358 (PYM). A chorismate-binding site is contributed by 391–392 (GT). Residue Glu418 coordinates Mg(2+). Chorismate is bound by residues Tyr506, Arg526, 558-560 (GAG), and Gly560. Glu573 contacts Mg(2+).

The protein belongs to the anthranilate synthase component I family. Heterotetramer consisting of two non-identical subunits: a beta subunit and a large alpha subunit. Mg(2+) serves as cofactor. As to expression, expressed in the central cylinder of mature primary root zones, including pericycle and early lateral root primordia, and vasculature of cotyledons.

The protein localises to the plastid. The protein resides in the chloroplast. It carries out the reaction chorismate + L-glutamine = anthranilate + pyruvate + L-glutamate + H(+). It functions in the pathway amino-acid biosynthesis; L-tryptophan biosynthesis; L-tryptophan from chorismate: step 1/5. With respect to regulation, feedback inhibition by tryptophan. Part of a heterotetrameric complex that catalyzes the two-step biosynthesis of anthranilate, an intermediate in the biosynthesis of L-tryptophan. In the first step, the glutamine-binding beta subunit of anthranilate synthase (AS) provides the glutamine amidotransferase activity which generates ammonia as a substrate that, along with chorismate, is used in the second step, catalyzed by the large alpha subunit of AS to produce anthranilate. Plays an important regulatory role in auxin production via the tryptophan-dependent biosynthetic pathway. In Arabidopsis thaliana (Mouse-ear cress), this protein is Anthranilate synthase alpha subunit 1, chloroplastic (ASA1).